A 298-amino-acid polypeptide reads, in one-letter code: ATP synthase F(1) complex subunit gamma, mitochondrial (298 aa).

The N-terminal 25 residues, 1 to 25 (MFSRAGVAGLSAWTLQPQWIQVRNM), are a transit peptide targeting the mitochondrion. Residue Lys39 is modified to N6-acetyllysine. An N6-succinyllysine modification is found at Lys49. N6-acetyllysine is present on Lys55. An N6-acetyllysine; alternate modification is found at Lys115. Residue Lys115 is modified to N6-succinyllysine; alternate. Ser146 is subject to Phosphoserine. Position 154 is an N6-acetyllysine; alternate (Lys154). Position 154 is an N6-succinyllysine; alternate (Lys154). N6-acetyllysine is present on Lys197. N6-succinyllysine is present on Lys270.

The protein belongs to the ATPase gamma chain family. In terms of assembly, component of the ATP synthase complex composed at least of ATP5F1A/subunit alpha, ATP5F1B/subunit beta, ATP5MC1/subunit c (homooctomer), MT-ATP6/subunit a, MT-ATP8/subunit 8, ATP5ME/subunit e, ATP5MF/subunit f, ATP5MG/subunit g, ATP5MK/subunit k, ATP5MJ/subunit j, ATP5F1C/subunit gamma, ATP5F1D/subunit delta, ATP5F1E/subunit epsilon, ATP5PF/subunit F6, ATP5PB/subunit b, ATP5PD/subunit d, ATP5PO/subunit OSCP. ATP synthase complex consists of a soluble F(1) head domain (subunits alpha(3) and beta(3)) - the catalytic core - and a membrane F(0) domain - the membrane proton channel (subunits c, a, 8, e, f, g, k and j). These two domains are linked by a central stalk (subunits gamma, delta, and epsilon) rotating inside the F1 region and a stationary peripheral stalk (subunits F6, b, d, and OSCP). Interacts with FLVCR2; this interaction occurs in the absence of heme and is disrupted upon heme binding.

It localises to the mitochondrion inner membrane. Its function is as follows. Subunit gamma, of the mitochondrial membrane ATP synthase complex (F(1)F(0) ATP synthase or Complex V) that produces ATP from ADP in the presence of a proton gradient across the membrane which is generated by electron transport complexes of the respiratory chain. ATP synthase complex consist of a soluble F(1) head domain - the catalytic core - and a membrane F(1) domain - the membrane proton channel. These two domains are linked by a central stalk rotating inside the F(1) region and a stationary peripheral stalk. During catalysis, ATP synthesis in the catalytic domain of F(1) is coupled via a rotary mechanism of the central stalk subunits to proton translocation. In vivo, can only synthesize ATP although its ATP hydrolase activity can be activated artificially in vitro. With the central stalk subunit delta, is essential for the biogenesis of F(1) catalytic part of the ATP synthase complex namely in the formation of F1 assembly intermediate. The protein is ATP synthase F(1) complex subunit gamma, mitochondrial of Macaca fascicularis (Crab-eating macaque).